The sequence spans 412 residues: Serine hydroxymethyltransferase (412 aa).

Residues L117 and 121–123 contribute to the (6S)-5,6,7,8-tetrahydrofolate site; that span reads GHL. At K226 the chain carries N6-(pyridoxal phosphate)lysine.

The protein belongs to the SHMT family. Homodimer. Pyridoxal 5'-phosphate serves as cofactor.

It is found in the cytoplasm. It catalyses the reaction (6R)-5,10-methylene-5,6,7,8-tetrahydrofolate + glycine + H2O = (6S)-5,6,7,8-tetrahydrofolate + L-serine. It functions in the pathway one-carbon metabolism; tetrahydrofolate interconversion. Its pathway is amino-acid biosynthesis; glycine biosynthesis; glycine from L-serine: step 1/1. Catalyzes the reversible interconversion of serine and glycine with tetrahydrofolate (THF) serving as the one-carbon carrier. This reaction serves as the major source of one-carbon groups required for the biosynthesis of purines, thymidylate, methionine, and other important biomolecules. Also exhibits THF-independent aldolase activity toward beta-hydroxyamino acids, producing glycine and aldehydes, via a retro-aldol mechanism. This chain is Serine hydroxymethyltransferase, found in Symbiobacterium thermophilum (strain DSM 24528 / JCM 14929 / IAM 14863 / T).